The chain runs to 123 residues: Histone H2B (123 aa).

The disordered stretch occupies residues methionine 1–arginine 32. Residues glycine 9–arginine 32 show a composition bias toward basic residues. The O-linked (GlcNAc) serine glycan is linked to serine 110. Lysine 118 participates in a covalent cross-link: Glycyl lysine isopeptide (Lys-Gly) (interchain with G-Cter in ubiquitin).

Belongs to the histone H2B family. As to quaternary structure, the nucleosome is a histone octamer containing two molecules each of H2A, H2B, H3 and H4 assembled in one H3-H4 heterotetramer and two H2A-H2B heterodimers. The octamer wraps approximately 147 bp of DNA. Monoubiquitination of Lys-118 gives a specific tag for epigenetic transcriptional activation and is also prerequisite for histone H3 'Lys-4' and 'Lys-79' methylation.

The protein resides in the nucleus. Its subcellular location is the chromosome. In terms of biological role, core component of nucleosome. Nucleosomes wrap and compact DNA into chromatin, limiting DNA accessibility to the cellular machineries which require DNA as a template. Histones thereby play a central role in transcription regulation, DNA repair, DNA replication and chromosomal stability. DNA accessibility is regulated via a complex set of post-translational modifications of histones, also called histone code, and nucleosome remodeling. The chain is Histone H2B from Urechis caupo (Innkeeper worm).